The following is a 52-amino-acid chain: uncharacterized protein (52 aa).

This is an uncharacterized protein from Homo sapiens (Human).